Consider the following 155-residue polypeptide: Endoribonuclease YbeY (155 aa).

Histidine 117, histidine 121, and histidine 127 together coordinate Zn(2+).

This sequence belongs to the endoribonuclease YbeY family. Zn(2+) is required as a cofactor.

It is found in the cytoplasm. Single strand-specific metallo-endoribonuclease involved in late-stage 70S ribosome quality control and in maturation of the 3' terminus of the 16S rRNA. In Treponema denticola (strain ATCC 35405 / DSM 14222 / CIP 103919 / JCM 8153 / KCTC 15104), this protein is Endoribonuclease YbeY.